A 65-amino-acid chain; its full sequence is Small ribosomal subunit protein bS21 (65 aa).

This sequence belongs to the bacterial ribosomal protein bS21 family.

The sequence is that of Small ribosomal subunit protein bS21 from Trichlorobacter lovleyi (strain ATCC BAA-1151 / DSM 17278 / SZ) (Geobacter lovleyi).